Here is a 228-residue protein sequence, read N- to C-terminus: Lipoprotein-releasing system ATP-binding protein LolD (228 aa).

An ABC transporter domain is found at 9–228 (LEAHDIQKNF…ELINGCLYRR (220 aa)). 44–51 (GRSGEGKS) serves as a coordination point for ATP.

This sequence belongs to the ABC transporter superfamily. Lipoprotein translocase (TC 3.A.1.125) family. As to quaternary structure, the complex is composed of two ATP-binding proteins (LolD) and two transmembrane proteins (LolC and LolE).

It is found in the cell inner membrane. Part of the ABC transporter complex LolCDE involved in the translocation of mature outer membrane-directed lipoproteins, from the inner membrane to the periplasmic chaperone, LolA. Responsible for the formation of the LolA-lipoprotein complex in an ATP-dependent manner. The sequence is that of Lipoprotein-releasing system ATP-binding protein LolD from Protochlamydia amoebophila (strain UWE25).